Here is a 302-residue protein sequence, read N- to C-terminus: Syntaxin-17 (302 aa).

At S2 the chain carries N-acetylserine. At 2-228 (SEDEEKVKLR…KNLGKAAKYK (227 aa)) the chain is on the cytoplasmic side. Position 41 is an N6-acetyllysine (K41). The stretch at 53–123 (EEHINAGRTV…EELKKQFNDE (71 aa)) forms a coiled coil. Phosphotyrosine; by ABL1 is present on Y157. The region spanning 162–224 (IPQDQNAAES…EEGTKNLGKA (63 aa)) is the t-SNARE coiled-coil homology domain. The helical transmembrane segment at 229–249 (LAALPVAGALIGGMVGGPIGL) threads the bilayer. Positions 229 to 275 (LAALPVAGALIGGMVGGPIGLLAGFKVAGIAAALGGGVLGFTGGKLI) are necessary and sufficient for localization to autophagosome. Residues 250–254 (LAGFK) lie on the Lumenal side of the membrane. A helical membrane pass occupies residues 255–275 (VAGIAAALGGGVLGFTGGKLI). Topologically, residues 276–302 (QRKKQKMMEKLTSSCPDLPSQTDKKCS) are cytoplasmic. S289 carries the phosphoserine modification. Residues 299–302 (KKCS) carry the Endoplasmic reticulum retention signal motif.

Belongs to the syntaxin family. Forms a SNARE complex composed of VAMP8, SNAP29 and STX17 involved in fusion of autophagosome with lysosome. Interacts with VAMP7 and VTI1B. Probably interacts with BET1, SCFD1 and SEC22B. Interacts with PTPN2 and ABL1; involved in STX17 phosphorylation. Interacts with COPB1. Interacts with TMED9 and TMED10; the interaction is direct. Interacts with ATG14. Interacts with RUBCNL/PACER; promoting targeting of RUBCNL/PACER to autophagosome. Interacts with VAMP8, SNAP29, VPS39 and VPS41; these interactions are increased in the absence of TMEM39A. Interacts with IRGM; promoting STX17 recruitment to autophagosomes. Interacts with ATG8 proteins GABARAP and MAP1LC3B. Interacts with RNF115; this interaction enhances STX17 stability which in turn promotes autophagosome maturation. Interacts with RAB39A (GTP-bound); the interaction promotes autophagosome-lysosome membrane fusion driven by STX17-SNAP29-VAMP8. Interacts with RAB39B; the interaction may promote a different fonction in autophagy as compared with RAB39A. As to quaternary structure, (Microbial infection) The interactions with VAMP8, SNAP29 and VPS41 are decreased in presence of SARS coronavirus-2/SARS-CoV-2 ORF3A protein. Phosphorylated at Tyr-157 probably by ABL1. Dephosphorylation by PTPN2; regulates exit from the endoplasmic reticulum. In terms of processing, (Microbial infection) Cleaved by the L.pneumophila serine protease Lpg1137, impairing endoplasmic reticulum-mitochondria communication, leading to inhibit autophagy.

The protein resides in the endoplasmic reticulum membrane. The protein localises to the smooth endoplasmic reticulum membrane. It localises to the endoplasmic reticulum-Golgi intermediate compartment membrane. Its subcellular location is the cytoplasmic vesicle. It is found in the autophagosome membrane. The protein resides in the COPII-coated vesicle membrane. The protein localises to the cytoplasm. It localises to the cytosol. Its subcellular location is the mitochondrion membrane. It is found in the autolysosome membrane. SNAREs, soluble N-ethylmaleimide-sensitive factor-attachment protein receptors, are essential proteins for fusion of cellular membranes. SNAREs localized on opposing membranes assemble to form a trans-SNARE complex, an extended, parallel four alpha-helical bundle that drives membrane fusion. STX17 is a SNARE of the autophagosome involved in autophagy through the direct control of autophagosome membrane fusion with the lysosome membrane. May also play a role in the early secretory pathway where it may maintain the architecture of the endoplasmic reticulum-Golgi intermediate compartment/ERGIC and Golgi and/or regulate transport between the endoplasmic reticulum, the ERGIC and the Golgi. This Homo sapiens (Human) protein is Syntaxin-17.